Reading from the N-terminus, the 469-residue chain is MSTQNNQSIRSSCDRCRSHKLKCTVAPENSRSGSNRCTRCIRAQVTCVFGHRSQSKRSTNVKKADIKSGTNSQETTSMQASTIVPGRVSVSPDLWVGRQEVEEGLPIGSDGGPSMGDGDLWAELGTNHDLNVFDLTPSSLPTYNSQQQFSATDFCSAPMVPHSDLSAINSQEWQFDVSEHPDQTTTAPHVIVQLSALVTNIHETSKSLGESFWASLAESSQLKNYPIGRVLSLSQDFTAILECIWMSKTMDYKQSSSFVTSESDGQDGISSFELEDVLDYGELLSTVGTSPGRSDFSTSTHSSVATAVDMPTMLLVLSCYTSLTKLYSLVFEHFESHLSHLPHSYTSPTSHTSPRWGLGLQLGELPSADETCTKVYTAVQILLDAFQSVEDVVGLPRSLSAVRQQTCGKEEEAESGDVFNRASLWTDFLAKSVFKATVKGTSEEDCEEIRQLSIKVKSLKALIRERMKL.

The segment at residues 13–47 (CDRCRSHKLKCTVAPENSRSGSNRCTRCIRAQVTC) is a DNA-binding region (zn(2)-C6 fungal-type). The interval 58–84 (STNVKKADIKSGTNSQETTSMQASTIV) is disordered. Residues 68-82 (SGTNSQETTSMQAST) are compositionally biased toward polar residues.

The protein resides in the nucleus. In terms of biological role, transcription factor that regulates the expression of the gene cluster that mediates the biosynthesis of Equisetin. This Fusarium heterosporum protein is Equisetin cluster transcription factor eqxR.